A 142-amino-acid chain; its full sequence is Large ribosomal subunit protein bL17 (142 aa).

It belongs to the bacterial ribosomal protein bL17 family. Part of the 50S ribosomal subunit. Contacts protein L32.

This is Large ribosomal subunit protein bL17 from Protochlamydia amoebophila (strain UWE25).